The following is a 362-amino-acid chain: MKINGTPYRTIWLAKDGRTVEIIDQTRLPHEFVVVPLASLEDAAKSIKDMWVRGAPLIGATAAYGMALATLADASDAGLERAYQVLHATRPTAINLKWALDEMIAALTPLPVPERSAAAYARAAEICDEDSAQNAALGEHGAAIIAAHHKAKNRTINILTHCNAGWLATVDWGTALAPIYKAFDAGIPLHVWVDETRPRNQGASLTARELNWHGVPHTVIADNTGGHLMQHGMVDLCIVGTDRTTRNGDVCNKIGTYLKALAAKDNNVPFYVGLPSPTIDWNVADGVKEIPIEERSDREQTHIFGKTEDGVVREVQVTPDGSPAVNYGFDVTPARLVTGLITERGVCEASPEGLKGLFPERA.

Substrate contacts are provided by residues 53 to 55 (RGA), Arg90, and Gln201. Asp242 acts as the Proton donor in catalysis. 252-253 (NK) lines the substrate pocket.

This sequence belongs to the eIF-2B alpha/beta/delta subunits family. MtnA subfamily.

It carries out the reaction 5-(methylsulfanyl)-alpha-D-ribose 1-phosphate = 5-(methylsulfanyl)-D-ribulose 1-phosphate. Its pathway is amino-acid biosynthesis; L-methionine biosynthesis via salvage pathway; L-methionine from S-methyl-5-thio-alpha-D-ribose 1-phosphate: step 1/6. Catalyzes the interconversion of methylthioribose-1-phosphate (MTR-1-P) into methylthioribulose-1-phosphate (MTRu-1-P). This Paramagnetospirillum magneticum (strain ATCC 700264 / AMB-1) (Magnetospirillum magneticum) protein is Methylthioribose-1-phosphate isomerase.